A 130-amino-acid chain; its full sequence is Small ribosomal subunit protein uS8 (130 aa).

The protein belongs to the universal ribosomal protein uS8 family. In terms of assembly, part of the 30S ribosomal subunit. Contacts proteins S5 and S12.

One of the primary rRNA binding proteins, it binds directly to 16S rRNA central domain where it helps coordinate assembly of the platform of the 30S subunit. The sequence is that of Small ribosomal subunit protein uS8 from Erwinia tasmaniensis (strain DSM 17950 / CFBP 7177 / CIP 109463 / NCPPB 4357 / Et1/99).